Consider the following 1112-residue polypeptide: MPRRTDLRHVLVIGSGPILIGQAAEFDYSGTQACRVLRAEGLTVTLINSNPATIMTDPEYADYTYVEPITPDFVERVIAQQAERGNKIDALLATLGGQTALNTAVALSENGVLERYDVELIGADFDAIQRGEDRQRFKDIVTKVGGESAKSRVCFTMEEVRETVGELGLPVVVRPSFTMGGLGSGMAYSAEDVERMAGHGLASSPSANVLIEESIFGWKEYELELMRDRHDNVVVVCSIENFDPMGVHTGDSVTVAPAMTLTDREYQTMRDLGIAILREVGVATGGCNIQFAVNPKDGRLIVIEMNPRVSRSSALASKATGFPIAKIAAKLAIGYTLDEILNDITKETPACFEPTLDYVVVKAPRFAFEKFPGADATLTTTMKSVGEAMSLGRNFIEALGKVMRSLETGRAGFWTAPDPIATVDEVLENLRTPTDGRLYDIEFALRLGASVEQVAEASGVDPWFVDQIAGLVALRTELLDAPVLDGTLLRRAKNSGLSDRQIAALRPELAGEVGVRALRQRLGIHPVFKTVDTCAAEFEAKTPYHYSSYELDPAAESEVAPQAERPKVLILGSGPNRIGQGIEFDYSCVHAATTLSEAGFETVMINCNPETVSTDYDTADRLYFEPLTFEDVLEIYYAESASGAGGPGVAGVIVQLGGQTPLGLAERLEQAGVPIVGTSPKAIDLAEDRGAFGEVLRTAGLPAPRFGLATTFDQARRIAADIGYPVLVRPSYVLGGRGMEIVYDEQTLEGYITRATQLSPEHPVLVDRFLEDAIEIDVDALCDGTEVYIGGIMEHIEEAGIHSGDSACALPPVTLGRSDIESVRRATEAIAHGVGVVGLLNVQYALKDDVLYVLEANPRASRTVPFVSKATAVPLAKACARIMLGASIAQLREEGVLAATGDGATTARNAPVAVKEAVLPFHRFRKADGAQIDSLLGPEMKSTGEVMGIDHDFGSAFAKSQTAAYGSLPSEGTVFVSVANRDKRSLVFPVKRLADLGFKVLATEGTAEMLRRNGIPCDEVRKHFEEPGAGRPARSAVEAIRAGDVAMVINTPYGNSGPRIDGYEIRSAAVSMNIPCITTVQGASAAVQGIEASLRGDIGVMSLQELHSELGN.

The interval 1 to 407 (MPRRTDLRHV…ALGKVMRSLE (407 aa)) is carboxyphosphate synthetic domain. Residues arginine 134, arginine 174, glycine 180, glycine 181, glutamate 213, isoleucine 215, glutamate 220, glycine 246, valine 247, histidine 248, glutamine 290, and glutamate 304 each contribute to the ATP site. In terms of domain architecture, ATP-grasp 1 spans 138-333 (KDIVTKVGGE…IAKIAAKLAI (196 aa)). Glutamine 290, glutamate 304, and asparagine 306 together coordinate Mg(2+). Positions 290, 304, and 306 each coordinate Mn(2+). The interval 408–559 (TGRAGFWTAP…ELDPAAESEV (152 aa)) is oligomerization domain. Positions 560–965 (APQAERPKVL…AFAKSQTAAY (406 aa)) are carbamoyl phosphate synthetic domain. Residues 693 to 884 (GEVLRTAGLP…LAKACARIML (192 aa)) form the ATP-grasp 2 domain. 10 residues coordinate ATP: arginine 729, arginine 768, leucine 770, glutamate 775, glycine 800, isoleucine 801, histidine 802, serine 803, glutamine 843, and glutamate 855. Mg(2+)-binding residues include glutamine 843, glutamate 855, and asparagine 857. Residues glutamine 843, glutamate 855, and asparagine 857 each contribute to the Mn(2+) site. In terms of domain architecture, MGS-like spans 966 to 1112 (GSLPSEGTVF…LQELHSELGN (147 aa)). An allosteric domain region spans residues 966–1112 (GSLPSEGTVF…LQELHSELGN (147 aa)).

This sequence belongs to the CarB family. Composed of two chains; the small (or glutamine) chain promotes the hydrolysis of glutamine to ammonia, which is used by the large (or ammonia) chain to synthesize carbamoyl phosphate. Tetramer of heterodimers (alpha,beta)4. Requires Mg(2+) as cofactor. The cofactor is Mn(2+).

The catalysed reaction is hydrogencarbonate + L-glutamine + 2 ATP + H2O = carbamoyl phosphate + L-glutamate + 2 ADP + phosphate + 2 H(+). It catalyses the reaction hydrogencarbonate + NH4(+) + 2 ATP = carbamoyl phosphate + 2 ADP + phosphate + 2 H(+). The protein operates within amino-acid biosynthesis; L-arginine biosynthesis; carbamoyl phosphate from bicarbonate: step 1/1. Its pathway is pyrimidine metabolism; UMP biosynthesis via de novo pathway; (S)-dihydroorotate from bicarbonate: step 1/3. In terms of biological role, large subunit of the glutamine-dependent carbamoyl phosphate synthetase (CPSase). CPSase catalyzes the formation of carbamoyl phosphate from the ammonia moiety of glutamine, carbonate, and phosphate donated by ATP, constituting the first step of 2 biosynthetic pathways, one leading to arginine and/or urea and the other to pyrimidine nucleotides. The large subunit (synthetase) binds the substrates ammonia (free or transferred from glutamine from the small subunit), hydrogencarbonate and ATP and carries out an ATP-coupled ligase reaction, activating hydrogencarbonate by forming carboxy phosphate which reacts with ammonia to form carbamoyl phosphate. The protein is Carbamoyl phosphate synthase large chain of Mycobacterium sp. (strain JLS).